Here is a 323-residue protein sequence, read N- to C-terminus: E3 ubiquitin-protein ligase makorin (323 aa).

2 consecutive C3H1-type zinc fingers follow at residues 1-28 (MSDR…HDSK) and 29-56 (DPPN…HVRA). Positions 62 to 74 (LSSDSESLDRSIS) are enriched in low complexity. The interval 62–92 (LSSDSESLDRSISTTPSRHLQQQGDNNDGDK) is disordered. Positions 75-87 (TTPSRHLQQQGDN) are enriched in polar residues. The C3H1-type 3 zinc-finger motif lies at 101–128 (PREYPICSFAAAGDCPRGNQCPHMHGDL). The segment at 129–158 (CNTCGKKCLHPFRPEEREEHTKECEKKQKH) is makorin-type Cys-His. An RING-type zinc finger spans residues 170–228 (CSVCLDRILSKATPGERKFGLLTECDHPFCIQCIRNWRSSAPVSGMDVNSTLRACPICR). The C3H1-type 4 zinc-finger motif lies at 257 to 286 (KLRSIDCKHFNFGNGNCPFGASCFYKHAYS).

It carries out the reaction S-ubiquitinyl-[E2 ubiquitin-conjugating enzyme]-L-cysteine + [acceptor protein]-L-lysine = [E2 ubiquitin-conjugating enzyme]-L-cysteine + N(6)-ubiquitinyl-[acceptor protein]-L-lysine.. It functions in the pathway protein modification; protein ubiquitination. In terms of biological role, E3 ubiquitin ligase catalyzing the covalent attachment of ubiquitin moieties onto substrate proteins. The protein is E3 ubiquitin-protein ligase makorin (MKRN) of Arabidopsis thaliana (Mouse-ear cress).